The primary structure comprises 182 residues: Protein SYM1 (182 aa).

3 helical membrane passes run 51 to 70 (TLRP…DKWY), 98 to 118 (LIFA…MEGG), and 135 to 155 (LLAN…LVPV).

Belongs to the peroxisomal membrane protein PXMP2/4 family.

It localises to the mitochondrion inner membrane. May be involved in cellular response to stress. Required to maintain mitochondrial DNA (mtDNA) integrity and stability. The protein is Protein SYM1 (SYM1) of Eremothecium gossypii (strain ATCC 10895 / CBS 109.51 / FGSC 9923 / NRRL Y-1056) (Yeast).